The sequence spans 550 residues: Enhanced filamentous growth protein 1 (550 aa).

Disordered stretches follow at residues 17-48, 72-95, and 123-182; these read NNGMPQQTTAANQQAFPQQQQPTTTGNASQQQ, QGQPGQQTGQTAGQQQQQQQQQQQ, and QLSQ…QPTP. Over residues 123–153 the composition is skewed to polar residues; the sequence is QLSQPQPQHYNGSNRNYTSAPSGAPIPSNST. Phosphothreonine is present on residues threonine 181 and threonine 208. The 107-residue stretch at 206–312 folds into the HTH APSES-type domain; the sequence is RVTTTMWEDE…RDIKRVIQTG (107 aa). Positions 240–261 form a DNA-binding region, H-T-H motif; the sequence is GTKLLNVAQMTRGRRDGILKSE. 2 disordered regions span residues 329–435 and 476–550; these read TSAS…STTN and SSYP…KEEK. Residues 342–383 are compositionally biased toward low complexity; the sequence is AAATTTAATAISKSSSGNGNSISATSGGSNVSGASGAGSTTS. Positions 384-394 are enriched in polar residues; the sequence is PVNTKAATTAG. The span at 395-416 shows a compositional bias: low complexity; the sequence is TPQGNYYQTYNQQQYPQQYGQY. Residues 420-435 are compositionally biased toward polar residues; sequence GKNQNTPASQPGSTTN. Positions 476-502 are enriched in low complexity; sequence SSYPYQQQQQKQQQQQPNQQQQSDQQQ. The span at 514–544 shows a compositional bias: polar residues; that stretch reads SVHQSPQVQSLTQGSVHPSPQQHQANQSAST.

This sequence belongs to the EFG1/PHD1/stuA family. As to quaternary structure, interacts with CZF1 and FLO8. In terms of processing, thr-208 is a phosphorylation target to promote hyphal induction by a subset of environmental cues. Phosphorylation at Thr-181 by the CDc28/HGC1 complex represses cell separation genes and leads to hyphal chain formation.

Its subcellular location is the nucleus. In terms of biological role, transcriptional regulator of the switch between 2 heritable states, the white and opaque states. These 2 cell types differ in many characteristics, including cell structure, mating competence, and virulence. Each state is heritable for many generations, and switching between states occurs stochastically, at low frequency. Antagonizes the action of WOR1, WOR2 and CZF1, and promotes the white state. In white cells, EFG1 represses WOR1 indirectly through WOR2 to maintain white cell identity. Binds target gene promoters at the EFG1 recognition sequence (EGRbox) TATGCATA. Acts as a major regulator of cell wall dynamics and plays a role in interactions with extracellular matrices. Required for TOR1-dependent cellular aggregation and adhesin expression. Required for both normoxic and hypoxic biofilm formation. Hypoxic biofilm formation is a major cause of perseverance and antifungal resistance during infections. Contributes to virulence by regulating hyphal formation and the factors that enable C.albicans to invade and injure endothelial cells. Required for the formation of thick-walled big resting spores called chlamydospores, which survive in unfavorable conditions. Mediates the expression of virulence factors SAP4, SAP5and SAP6 during infection. Involved in drug resistance by regulating the expression of ERG3. The polypeptide is Enhanced filamentous growth protein 1 (EFG1) (Candida albicans (strain SC5314 / ATCC MYA-2876) (Yeast)).